The chain runs to 252 residues: tRNA (guanine-N(1)-)-methyltransferase (252 aa).

S-adenosyl-L-methionine-binding positions include Gly-116 and 135–140; that span reads LGDYVL.

Belongs to the RNA methyltransferase TrmD family. As to quaternary structure, homodimer.

The protein localises to the cytoplasm. It catalyses the reaction guanosine(37) in tRNA + S-adenosyl-L-methionine = N(1)-methylguanosine(37) in tRNA + S-adenosyl-L-homocysteine + H(+). Specifically methylates guanosine-37 in various tRNAs. The protein is tRNA (guanine-N(1)-)-methyltransferase of Limosilactobacillus fermentum (strain NBRC 3956 / LMG 18251) (Lactobacillus fermentum).